We begin with the raw amino-acid sequence, 156 residues long: Small ribosomal subunit protein uS7 (156 aa).

Belongs to the universal ribosomal protein uS7 family. In terms of assembly, part of the 30S ribosomal subunit. Contacts proteins S9 and S11.

In terms of biological role, one of the primary rRNA binding proteins, it binds directly to 16S rRNA where it nucleates assembly of the head domain of the 30S subunit. Is located at the subunit interface close to the decoding center, probably blocks exit of the E-site tRNA. The sequence is that of Small ribosomal subunit protein uS7 from Prochlorococcus marinus (strain MIT 9303).